The following is a 387-amino-acid chain: Exodeoxyribonuclease 7 large subunit (387 aa).

It belongs to the XseA family. In terms of assembly, heterooligomer composed of large and small subunits.

It is found in the cytoplasm. The enzyme catalyses Exonucleolytic cleavage in either 5'- to 3'- or 3'- to 5'-direction to yield nucleoside 5'-phosphates.. Bidirectionally degrades single-stranded DNA into large acid-insoluble oligonucleotides, which are then degraded further into small acid-soluble oligonucleotides. The sequence is that of Exodeoxyribonuclease 7 large subunit from Campylobacter jejuni (strain RM1221).